A 150-amino-acid chain; its full sequence is Transcription antitermination protein NusB (150 aa).

This sequence belongs to the NusB family.

In terms of biological role, involved in transcription antitermination. Required for transcription of ribosomal RNA (rRNA) genes. Binds specifically to the boxA antiterminator sequence of the ribosomal RNA (rrn) operons. The chain is Transcription antitermination protein NusB from Streptococcus pyogenes serotype M4 (strain MGAS10750).